We begin with the raw amino-acid sequence, 238 residues long: MORN repeat-containing protein 3 (238 aa).

MORN repeat units lie at residues 38–60, 62–84, 91–113, 114–136, 137–159, 160–182, and 184–205; these read YTGE…RRKS, YEGD…DSNT, YSGY…AKEY, YEGE…NGDI, YEGE…NENR, YEGS…NKGQ, and YEGV…GRTE.

The protein localises to the cytoplasmic vesicle. Its subcellular location is the secretory vesicle. The protein resides in the acrosome. In terms of biological role, assembles a suppression complex (suppresome) by tethering SIRT1 and MDM2 to regulate composite modifications of p53/TP53. Confers both deacetylation-mediated functional inactivation, by SIRT1, and ubiquitination-dependent degradation, by MDM2, of p53/TP53, promoting a proliferative and cell survival behaviors. May play a role in the regulation of spermatogenesis. The polypeptide is MORN repeat-containing protein 3 (morn3) (Xenopus laevis (African clawed frog)).